The chain runs to 92 residues: RNA-binding protein Hfq (92 aa).

One can recognise a Sm domain in the interval Asp-9–Val-68. The segment at Pro-72–Gln-92 is disordered.

The protein belongs to the Hfq family. Homohexamer.

Its function is as follows. RNA chaperone that binds small regulatory RNA (sRNAs) and mRNAs to facilitate mRNA translational regulation in response to envelope stress, environmental stress and changes in metabolite concentrations. Also binds with high specificity to tRNAs. In Xanthomonas campestris pv. campestris (strain 8004), this protein is RNA-binding protein Hfq.